A 284-amino-acid polypeptide reads, in one-letter code: Bifunctional protein FolD (284 aa).

166–168 (GAS) lines the NADP(+) pocket.

Belongs to the tetrahydrofolate dehydrogenase/cyclohydrolase family. As to quaternary structure, homodimer.

The catalysed reaction is (6R)-5,10-methylene-5,6,7,8-tetrahydrofolate + NADP(+) = (6R)-5,10-methenyltetrahydrofolate + NADPH. It carries out the reaction (6R)-5,10-methenyltetrahydrofolate + H2O = (6R)-10-formyltetrahydrofolate + H(+). Its pathway is one-carbon metabolism; tetrahydrofolate interconversion. Catalyzes the oxidation of 5,10-methylenetetrahydrofolate to 5,10-methenyltetrahydrofolate and then the hydrolysis of 5,10-methenyltetrahydrofolate to 10-formyltetrahydrofolate. This is Bifunctional protein FolD from Legionella pneumophila (strain Corby).